The primary structure comprises 510 residues: NAD(P)H-quinone oxidoreductase subunit 2 A, chloroplastic (510 aa).

The next 13 helical transmembrane spans lie at 24 to 44 (LLLF…GLIL), 57 to 77 (IPWL…ALLF), 99 to 119 (IFQF…VEYI), 124 to 144 (MAIT…MFLC), 149 to 169 (LITI…LSGY), 183 to 203 (YLLM…WLYG), 229 to 249 (ISIA…PAPF), 295 to 315 (WHLL…LIAI), 323 to 343 (MLAY…IVGD), 354 to 374 (YMLF…LFGL), 395 to 415 (ALSS…AGFF), 418 to 438 (LYLF…IGLL), and 484 to 504 (MILC…IIAI).

Belongs to the complex I subunit 2 family. In terms of assembly, NDH is composed of at least 16 different subunits, 5 of which are encoded in the nucleus.

The protein resides in the plastid. Its subcellular location is the chloroplast thylakoid membrane. It carries out the reaction a plastoquinone + NADH + (n+1) H(+)(in) = a plastoquinol + NAD(+) + n H(+)(out). It catalyses the reaction a plastoquinone + NADPH + (n+1) H(+)(in) = a plastoquinol + NADP(+) + n H(+)(out). Functionally, NDH shuttles electrons from NAD(P)H:plastoquinone, via FMN and iron-sulfur (Fe-S) centers, to quinones in the photosynthetic chain and possibly in a chloroplast respiratory chain. The immediate electron acceptor for the enzyme in this species is believed to be plastoquinone. Couples the redox reaction to proton translocation, and thus conserves the redox energy in a proton gradient. The chain is NAD(P)H-quinone oxidoreductase subunit 2 A, chloroplastic from Piper cenocladum (Ant piper).